The sequence spans 197 residues: Phospholipid hydroperoxide glutathione peroxidase (197 aa).

The residue at position 40 (Ser40) is a Phosphoserine. Residue Sec73 is part of the active site. Sec73 is a non-standard amino acid (selenocysteine).

Belongs to the glutathione peroxidase family. As to quaternary structure, monomer. Has a tendency to form higher mass oligomers. Interacts with FUNDC1; this interaction promotes GPX4 recruitment into mitochondria through TOM/TIM complex where it is degraded by mitophagy.

The protein resides in the mitochondrion. It is found in the cytoplasm. The enzyme catalyses a hydroperoxy polyunsaturated fatty acid + 2 glutathione = a hydroxy polyunsaturated fatty acid + glutathione disulfide + H2O. The catalysed reaction is (12S)-hydroperoxy-(5Z,8Z,10E,14Z)-eicosatetraenoate + 2 glutathione = (12S)-hydroxy-(5Z,8Z,10E,14Z)-eicosatetraenoate + glutathione disulfide + H2O. It catalyses the reaction (13S)-hydroperoxy-(9Z,11E)-octadecadienoate + 2 glutathione = (13S)-hydroxy-(9Z,11E)-octadecadienoate + glutathione disulfide + H2O. Essential antioxidant peroxidase that directly reduces phospholipid hydroperoxide even if they are incorporated in membranes and lipoproteins. Can also reduce fatty acid hydroperoxide, cholesterol hydroperoxide and thymine hydroperoxide. Plays a key role in protecting cells from oxidative damage by preventing membrane lipid peroxidation. Required to prevent cells from ferroptosis, a non-apoptotic cell death resulting from an iron-dependent accumulation of lipid reactive oxygen species. The presence of selenocysteine (Sec) versus Cys at the active site is essential for life: it provides resistance to overoxidation and prevents cells against ferroptosis. The presence of Sec at the active site is also essential for the survival of a specific type of parvalbumin-positive interneurons, thereby preventing against fatal epileptic seizures. May be required to protect cells from the toxicity of ingested lipid hydroperoxides. Required for normal sperm development and male fertility. Essential for maturation and survival of photoreceptor cells. Plays a role in a primary T-cell response to viral and parasitic infection by protecting T-cells from ferroptosis and by supporting T-cell expansion. Plays a role of glutathione peroxidase in platelets in the arachidonic acid metabolism. Reduces hydroperoxy ester lipids formed by a 15-lipoxygenase that may play a role as down-regulator of the cellular 15-lipoxygenase pathway. The protein is Phospholipid hydroperoxide glutathione peroxidase of Sapajus apella (Brown-capped capuchin).